The chain runs to 123 residues: uncharacterized protein (123 aa).

Basic and acidic residues predominate over residues 31-57; the sequence is KLRTEAKKSKDKERTKEKEKHESLAKE. The disordered stretch occupies residues 31–58; the sequence is KLRTEAKKSKDKERTKEKEKHESLAKEK. A helical membrane pass occupies residues 91 to 111; it reads IIIFLLILLVSGLMVGIFFGI.

It is found in the membrane. This is an uncharacterized protein from Mycoplasma genitalium (strain ATCC 33530 / DSM 19775 / NCTC 10195 / G37) (Mycoplasmoides genitalium).